The chain runs to 439 residues: Rho GTPase-activating protein 1 (439 aa).

M1 carries the N-acetylmethionine modification. The span at 28–48 (IDEKNWPSDEMPDFPKSDDSK) shows a compositional bias: basic and acidic residues. Residues 28-55 (IDEKNWPSDEMPDFPKSDDSKSSSPEPV) form a disordered region. S44, S47, S50, and S51 each carry phosphoserine. A CRAL-TRIO domain is found at 63 to 218 (PYYDIARHQI…QVLKYDDFLK (156 aa)). A Phosphotyrosine modification is found at Y65. K80 bears the N6-acetyllysine mark. The SH3-binding motif lies at 228 to 238 (PKPMPPRPPLP). The Rho-GAP domain maps to 244-431 (VSLQHLQEKS…FLLDHQGELF (188 aa)).

Found in a complex with XPO7, EIF4A1, ARHGAP1, VPS26A, VPS29, VPS35 and SFN. Interacts with BNIPL.

The protein localises to the cytoplasm. In terms of biological role, GTPase activator for the Rho, Rac and Cdc42 proteins, converting them to the putatively inactive GDP-bound state. Cdc42 seems to be the preferred substrate. The sequence is that of Rho GTPase-activating protein 1 (Arhgap1) from Mus musculus (Mouse).